Reading from the N-terminus, the 88-residue chain is Class I hydrophobin F (88 aa).

A signal peptide spans 1–21 (MLSRLFTVPAILLATLGSAAT). 4 cysteine pairs are disulfide-bonded: C30–C67, C34–C58, C35–C51, and C68–C84.

This sequence belongs to the fungal hydrophobin family.

The protein resides in the secreted. It localises to the cell wall. Its subcellular location is the vacuole. It is found in the cytoplasmic vesicle. In terms of biological role, aerial growth, conidiation, and dispersal of filamentous fungi in the environment rely upon a capability of their secreting small amphipathic proteins called hydrophobins (HPBs) with low sequence identity. Class I can self-assemble into an outermost layer of rodlet bundles on aerial cell surfaces, conferring cellular hydrophobicity that supports fungal growth, development and dispersal; whereas Class II form highly ordered films at water-air interfaces through intermolecular interactions but contribute nothing to the rodlet structure. Hyd1F contributes to certain cell wall-related features, such as hydrophobicity but is not involved in cell wall-related events during fungal proliferation in host hemocoel. Does not contribute to conidial hydrophobicity. This Beauveria bassiana (strain ARSEF 2860) (White muscardine disease fungus) protein is Class I hydrophobin F.